Reading from the N-terminus, the 188-residue chain is Small ribosomal subunit protein eS8 (188 aa).

The interval 1-34 (MGISRDSRHKRRLTGGRYPVHKKKRKYELGRPSS) is disordered. Residues 7 to 26 (SRHKRRLTGGRYPVHKKKRK) show a composition bias toward basic residues.

The protein belongs to the eukaryotic ribosomal protein eS8 family.

The chain is Small ribosomal subunit protein eS8 (RPS8) from Theileria parva (East coast fever infection agent).